The primary structure comprises 251 residues: Imidazole glycerol phosphate synthase subunit HisF (251 aa).

Residues Asp-11 and Asp-130 contribute to the active site.

Belongs to the HisA/HisF family. As to quaternary structure, heterodimer of HisH and HisF.

The protein resides in the cytoplasm. The enzyme catalyses 5-[(5-phospho-1-deoxy-D-ribulos-1-ylimino)methylamino]-1-(5-phospho-beta-D-ribosyl)imidazole-4-carboxamide + L-glutamine = D-erythro-1-(imidazol-4-yl)glycerol 3-phosphate + 5-amino-1-(5-phospho-beta-D-ribosyl)imidazole-4-carboxamide + L-glutamate + H(+). It functions in the pathway amino-acid biosynthesis; L-histidine biosynthesis; L-histidine from 5-phospho-alpha-D-ribose 1-diphosphate: step 5/9. Functionally, IGPS catalyzes the conversion of PRFAR and glutamine to IGP, AICAR and glutamate. The HisF subunit catalyzes the cyclization activity that produces IGP and AICAR from PRFAR using the ammonia provided by the HisH subunit. This is Imidazole glycerol phosphate synthase subunit HisF from Chlorobium phaeovibrioides (strain DSM 265 / 1930) (Prosthecochloris vibrioformis (strain DSM 265)).